The following is a 271-amino-acid chain: MCCDISKTLCVKPFIDPEEEISHRVSFLADYLRHSRASGYVLGISGGQDSALAGRLCQIAVESVRSIGFDATLWAIRLPYGQQFDESDAQTAMQFISPDEELSFDIRSATDNLCVDLNRSLGSKISDFNRGNIKARLRMVVQYAVAAHHDALVVGTDHAAEAVTGFFTKFGDGAADILPLYGLTKGQGRALLKALGACDSIIEKVPTADLLDDLPCLPDETELGLQYRDIDAFLEGKPVSEDITMAITERYKSTLHKRMPPITPHSTWWRK.

An ATP-binding site is contributed by 43 to 50 (GISGGQDS). Asp-49 is a binding site for Mg(2+). Arg-136 contributes to the deamido-NAD(+) binding site. Thr-156 contacts ATP. Glu-161 is a binding site for Mg(2+). 2 residues coordinate deamido-NAD(+): Lys-169 and Asp-176. Residues Lys-185 and Thr-207 each contribute to the ATP site. 256–257 (HK) contacts deamido-NAD(+).

It belongs to the NAD synthetase family. In terms of assembly, homodimer.

It carries out the reaction deamido-NAD(+) + NH4(+) + ATP = AMP + diphosphate + NAD(+) + H(+). The protein operates within cofactor biosynthesis; NAD(+) biosynthesis; NAD(+) from deamido-NAD(+) (ammonia route): step 1/1. Functionally, catalyzes the ATP-dependent amidation of deamido-NAD to form NAD. Uses ammonia as a nitrogen source. The sequence is that of NH(3)-dependent NAD(+) synthetase from Tropheryma whipplei (strain TW08/27) (Whipple's bacillus).